The sequence spans 134 residues: Ribulose bisphosphate carboxylase small subunit (134 aa).

Belongs to the RuBisCO small chain family. As to quaternary structure, heterohexadecamer of 8 large and 8 small subunits.

Functionally, ruBisCO catalyzes two reactions: the carboxylation of D-ribulose 1,5-bisphosphate, the primary event in carbon dioxide fixation, as well as the oxidative fragmentation of the pentose substrate. Both reactions occur simultaneously and in competition at the same active site. Although the small subunit is not catalytic it is essential for maximal activity. In Bradyrhizobium diazoefficiens (strain JCM 10833 / BCRC 13528 / IAM 13628 / NBRC 14792 / USDA 110), this protein is Ribulose bisphosphate carboxylase small subunit.